The following is a 468-amino-acid chain: Argininosuccinate lyase (468 aa).

This sequence belongs to the lyase 1 family. Argininosuccinate lyase subfamily.

The protein resides in the cytoplasm. The catalysed reaction is 2-(N(omega)-L-arginino)succinate = fumarate + L-arginine. It functions in the pathway amino-acid biosynthesis; L-arginine biosynthesis; L-arginine from L-ornithine and carbamoyl phosphate: step 3/3. This Paraburkholderia phymatum (strain DSM 17167 / CIP 108236 / LMG 21445 / STM815) (Burkholderia phymatum) protein is Argininosuccinate lyase.